The sequence spans 1300 residues: CRISPR-associated endonuclease Cas12a (1300 aa).

The wedge region 1 stretch occupies residues 1–24; that stretch reads MSIYQEFVNKYSLSKTLRFELIPQ. Recognition domain stretches follow at residues 25 to 339 and 340 to 591; these read GKTL…SFVI and DKLE…QKPY. Binds crRNA alone and in crRNA-target DNA heteroduplex stretches follow at residues 47 to 51 and 182 to 186; these read YKKAK and FHENR. A binds DNA in crRNA-target DNA heteroduplex region spans residues 301-305; it reads NEYIN. Binds crRNA in crRNA-target DNA heteroduplex regions lie at residues 326-329 and 538-541; these read KQIL and HKLK. The interval 591–595 is binds crRNA; the sequence is YSDEK. Residues 592–662 form a wedge region 2 region; the sequence is SDEKFKLNFE…GYKKIVYKLL (71 aa). Positions 662–679 are LKL, important for PAM recognition and DNA unwinding; sequence LPGANKMLPKVFFSAKSI. The tract at residues 663–762 is PAM-interacting domain (PI); sequence PGANKMLPKV…FYREVENQGY (100 aa). The segment at 671-677 is binds DNA protospacer adjacent motif (PAM) on target DNA; sequence KVFFSAK. Positions 692-704 are binds single-strand non-target DNA; that stretch reads RNHSTHTKNGSPQ. A wedge region 3 region spans residues 763–892; the sequence is KLTFENISES…PITINFKSSG (130 aa). Binds crRNA regions lie at residues 791–794 and 803–804; these read KDFS and LH. Catalysis depends on for pre-crRNA processing residues histidine 843, lysine 852, and lysine 869. Binds crRNA regions lie at residues 851 to 853 and 865 to 873; these read NKN and YDLIKDKRF. The ruvC-I stretch occupies residues 893 to 953; sequence ANKFNDEINL…IGNDRMKTNY (61 aa). The active-site For DNase activity of RuvC domain is aspartate 917. Positions 954-971 are bridge helix; it reads HDKLAAIEKDRDSARKDW. The interval 972–1078 is ruvC-II; that stretch reads KKINNIKEMK…KQTGIIYYVP (107 aa). The For DNase activity of RuvC domain role is filled by glutamate 1006. The interval 1079–1254 is nuclease domain; that stretch reads AGFTSKICPV…QAPKNMPQDA (176 aa). The active-site For DNase activity of RuvC domain is aspartate 1255. Positions 1255 to 1300 are ruvC-III; that stretch reads DANGAYHIGLKGLMLLGRIKNNQEGKKLNLVIKNEEYFEFVQNRNN.

This sequence belongs to the CRISPR-associated endonuclease Cas12a family. In terms of assembly, might be a homodimer. Might be a monomer. Requires Ca(2+) as cofactor. Mg(2+) is required as a cofactor.

It carries out the reaction Endonucleolytic cleavage to 5'-phosphodinucleotide and 5'-phosphooligonucleotide end-products.. The catalysed reaction is RNA = a 5'-hydroxy-ribonucleotide + n nucleoside-2',3'-cyclophosphates.. In terms of biological role, CRISPR (clustered regularly interspaced short palindromic repeat), is an adaptive immune system that provides protection against mobile genetic elements (viruses, transposable elements and conjugative plasmids). CRISPR clusters contain sequences complementary to antecedent mobile elements and target invading nucleic acids. CRISPR clusters are transcribed and processed into CRISPR RNA (crRNA). Has endonuclease activity on pre-crRNA and dsDNA, using different active sites. A single-RNA guided endonuclease that is also capable of guiding crRNA processing; correct processing of pre-crRNA requires only this protein and the CRISPR locus. pre-crRNA processing proceeds by an intramolecular nucleophilic attack on the scissile phosphate by the 2'-OH of the upstream ribonucleotide, the divalent cation (which is bound by the crRNA) is probably required for ordering the crRNA pseudoknot and/or increasing RNA binding. RNA mutagenesis studies show pre-crRNA cleavage is highly sequence- and structure-specific. Forms a complex with crRNA and complementary dsDNA, where the crRNA displaces the non-target DNA strand and directs endonucleolytic cleavage of both strands of the DNA. Cleavage results in staggered 5-base 5' overhangs 14-18 and 21-23 bases downstream of the PAM (protospacer adjacent motif) on the non-target and target strands respectively. Both target and non-target strand DNA are probably independently cleaved in the same active site. When this protein is expressed in E.coli it prevents plasmids homologous to the first CRISPR spacer from transforming, formally showing it is responsible for plasmid immunity. In Francisella tularensis subsp. novicida (strain U112), this protein is CRISPR-associated endonuclease Cas12a.